The following is a 64-amino-acid chain: Probable cytochrome c oxidase subunit 5C-3 (64 aa).

The chain crosses the membrane as a helical span at residues 15–34 (SVVKELVIGLTLGLAAGGLW).

This sequence belongs to the cytochrome c oxidase subunit 5C family.

The protein localises to the mitochondrion inner membrane. In terms of biological role, this protein is one of the nuclear-coded polypeptide chains of cytochrome c oxidase, the terminal oxidase in mitochondrial electron transport. This is Probable cytochrome c oxidase subunit 5C-3 from Arabidopsis thaliana (Mouse-ear cress).